Reading from the N-terminus, the 441-residue chain is Transcriptional regulatory protein ZraR (441 aa).

Positions 7 to 121 constitute a Response regulatory domain; it reads DILVVDDDVS…RLQETLEKAL (115 aa). Asp-56 carries the 4-aspartylphosphate modification. The 230-residue stretch at 141–370 folds into the Sigma-54 factor interaction domain; that stretch reads MIGSSPAMQH…LENAIERAVV (230 aa). ATP contacts are provided by Gly-172, Thr-173, Arg-329, and Arg-359. A DNA-binding region (H-T-H motif) is located at residues 421 to 440; the sequence is KTEAARQLGITRKTLLAKLS.

In terms of assembly, forms homohexamers in the crystal structure. However, the dimerization interface between DNA-binding domains observed in the crystal structure suggests that dodecamers, rather than hexamers, might be the functionally important oligomer. Post-translationally, phosphorylated by ZraS.

The protein localises to the cytoplasm. Its activity is regulated as follows. Activity of the ZraS/ZraR two-component system is repressed by the zinc-bound form of ZraP, which probably interacts with the periplasmic region of ZraS. In terms of biological role, part of the Zra signaling pathway, an envelope stress response (ESR) system composed of the periplasmic accessory protein ZraP, the histidine kinase ZraS and the transcriptional regulator ZraR. The ZraPSR system contributes to antibiotic resistance and is important for membrane integrity in the presence of membrane-targeting biocides. ZraR is a member of the two-component regulatory system ZraS/ZraR. When activated by ZraS, acts in conjunction with sigma-54 to regulate the expression of zraP in the presence of high Zn(2+) or Pb(2+) concentrations. Also positively autoregulates the expression of the zraSR operon. The protein is Transcriptional regulatory protein ZraR of Salmonella typhimurium (strain LT2 / SGSC1412 / ATCC 700720).